Reading from the N-terminus, the 359-residue chain is Aminomethyltransferase (359 aa).

The protein belongs to the GcvT family. In terms of assembly, the glycine cleavage system is composed of four proteins: P, T, L and H.

It catalyses the reaction N(6)-[(R)-S(8)-aminomethyldihydrolipoyl]-L-lysyl-[protein] + (6S)-5,6,7,8-tetrahydrofolate = N(6)-[(R)-dihydrolipoyl]-L-lysyl-[protein] + (6R)-5,10-methylene-5,6,7,8-tetrahydrofolate + NH4(+). Its function is as follows. The glycine cleavage system catalyzes the degradation of glycine. The protein is Aminomethyltransferase of Pseudoalteromonas atlantica (strain T6c / ATCC BAA-1087).